Reading from the N-terminus, the 159-residue chain is uncharacterized protein (159 aa).

Positions 7-151 (LLINYKTLEE…NPLIWEPAHI (145 aa)) constitute an N-acetyltransferase domain.

This is an uncharacterized protein from Bacillus pumilus (strain SAFR-032).